A 157-amino-acid polypeptide reads, in one-letter code: Putative 4-hydroxy-4-methyl-2-oxoglutarate aldolase (157 aa).

Residues 78 to 81 and Arg-100 each bind substrate; that span reads GDVI. Residue Asp-101 coordinates a divalent metal cation.

It belongs to the class II aldolase/RraA-like family. As to quaternary structure, homotrimer. Requires a divalent metal cation as cofactor.

It catalyses the reaction 4-hydroxy-4-methyl-2-oxoglutarate = 2 pyruvate. It carries out the reaction oxaloacetate + H(+) = pyruvate + CO2. Catalyzes the aldol cleavage of 4-hydroxy-4-methyl-2-oxoglutarate (HMG) into 2 molecules of pyruvate. Also contains a secondary oxaloacetate (OAA) decarboxylase activity due to the common pyruvate enolate transition state formed following C-C bond cleavage in the retro-aldol and decarboxylation reactions. This Mycobacterium leprae (strain Br4923) protein is Putative 4-hydroxy-4-methyl-2-oxoglutarate aldolase.